A 657-amino-acid chain; its full sequence is Transcription factor 12 (657 aa).

The segment covering 1–20 (MDEKGGTTSWGTSGQPSPSY) has biased composition (polar residues). Disordered regions lie at residues 1–76 (MDEK…SGLS), 89–285 (LGSP…QTGD), 297–340 (PDHT…YENS), 459–555 (VSAQ…ERRM), and 628–657 (KVSAVSAEPPTPHPGSHPGLSETTNPMGHM). A compositionally biased stretch (basic and acidic residues) spans 30 to 43 (HYSDHLNDSRKGTH). Polar residues-rich tracts occupy residues 49-70 (TPFSNSNLIGKTSGRGSFSLYS) and 93-112 (AQLSSSGKPETPYYSFSATS). The leucine-zipper stretch occupies residues 68-89 (LYSRDSGLSGCQSSLLRQELGL). A Nuclear localization signal motif is present at residues 130–136 (KKVRKVP). Polar residues-rich tracts occupy residues 168 to 193 (MFASTFFMQDGTHSSSDLWSSSNGMS), 202 to 216 (GTSTSHMSQSGSYGS), and 230 to 254 (VSPTDINTSLPPMSSFHRGSTSSSP). A compositionally biased stretch (low complexity) spans 300 to 311 (TSSSFPSNPSTP). Over residues 312–340 (VGSPSPLTGASQWSRSGGQAPSSPNYENS) the composition is skewed to polar residues. Basic and acidic residues-rich tracts occupy residues 493 to 505 (IKSEHKEKDENIH), 511 to 526 (DDMKSDDESSQKDIKV), and 543 to 555 (PEQKIEREKERRM). A bHLH domain is found at 552 to 605 (ERRMANNARERLRVRDINEAFKELGRMCQLHLKSEKPQTKLLILHQAVAVILSL). A class A specific domain region spans residues 607 to 630 (QQVRERNLNPKAACLKRREEEKVS). Over residues 648–657 (SETTNPMGHM) the composition is skewed to polar residues.

In terms of assembly, efficient DNA binding requires dimerization with another bHLH protein. Forms homo- or heterooligomers with myogenin, E12 and ITF2 proteins.

The protein resides in the nucleus. Transcriptional regulator. Involved in the initiation of neuronal differentiation. Activates transcription by binding to the E box-containing promoter. This Gallus gallus (Chicken) protein is Transcription factor 12 (TCF12).